The following is a 98-amino-acid chain: Small ribosomal subunit protein bS20 (98 aa).

A compositionally biased stretch (basic residues) spans 1 to 12 (MAPRKPSKKVGP). The tract at residues 1-31 (MAPRKPSKKVGPQKRPSAEKRVITSKKKQLR) is disordered.

It belongs to the bacterial ribosomal protein bS20 family.

In terms of biological role, binds directly to 16S ribosomal RNA. The chain is Small ribosomal subunit protein bS20 from Chlamydia trachomatis serovar L2 (strain ATCC VR-902B / DSM 19102 / 434/Bu).